The primary structure comprises 252 residues: Imidazole glycerol phosphate synthase subunit HisF (252 aa).

Residues aspartate 11 and aspartate 130 contribute to the active site.

It belongs to the HisA/HisF family. As to quaternary structure, heterodimer of HisH and HisF.

The protein localises to the cytoplasm. It carries out the reaction 5-[(5-phospho-1-deoxy-D-ribulos-1-ylimino)methylamino]-1-(5-phospho-beta-D-ribosyl)imidazole-4-carboxamide + L-glutamine = D-erythro-1-(imidazol-4-yl)glycerol 3-phosphate + 5-amino-1-(5-phospho-beta-D-ribosyl)imidazole-4-carboxamide + L-glutamate + H(+). Its pathway is amino-acid biosynthesis; L-histidine biosynthesis; L-histidine from 5-phospho-alpha-D-ribose 1-diphosphate: step 5/9. IGPS catalyzes the conversion of PRFAR and glutamine to IGP, AICAR and glutamate. The HisF subunit catalyzes the cyclization activity that produces IGP and AICAR from PRFAR using the ammonia provided by the HisH subunit. In Staphylococcus saprophyticus subsp. saprophyticus (strain ATCC 15305 / DSM 20229 / NCIMB 8711 / NCTC 7292 / S-41), this protein is Imidazole glycerol phosphate synthase subunit HisF.